The primary structure comprises 79 residues: Large ribosomal subunit protein uL24 (79 aa).

It belongs to the universal ribosomal protein uL24 family. As to quaternary structure, part of the 50S ribosomal subunit.

Its function is as follows. One of two assembly initiator proteins, it binds directly to the 5'-end of the 23S rRNA, where it nucleates assembly of the 50S subunit. Functionally, one of the proteins that surrounds the polypeptide exit tunnel on the outside of the subunit. The protein is Large ribosomal subunit protein uL24 of Lactobacillus gasseri (strain ATCC 33323 / DSM 20243 / BCRC 14619 / CIP 102991 / JCM 1131 / KCTC 3163 / NCIMB 11718 / NCTC 13722 / AM63).